The following is a 34-amino-acid chain: MSDIN-like toxin proprotein 12 (34 aa).

Residues 1 to 10 (MSDINATRLP) constitute a propeptide that is removed on maturation. The cyclopeptide (His-Pro) cross-link spans 11–19 (HPFPLGLQP). The propeptide occupies 20 to 34 (CAGDVDNLTLTKGEG).

The protein belongs to the MSDIN fungal toxin family. Processed by the macrocyclase-peptidase enzyme POPB to yield a toxic cyclic nonapeptide. POPB first removes 10 residues from the N-terminus. Conformational trapping of the remaining peptide forces the enzyme to release this intermediate rather than proceed to macrocyclization. The enzyme rebinds the remaining peptide in a different conformation and catalyzes macrocyclization of the N-terminal 9 residues.

Functionally, probable toxin that belongs to the MSDIN-like toxin family responsible for a large number of food poisoning cases and deaths. This chain is MSDIN-like toxin proprotein 12, found in Amanita bisporigera (Destroying angel).